The sequence spans 557 residues: 2-succinyl-5-enolpyruvyl-6-hydroxy-3-cyclohexene-1-carboxylate synthase (557 aa).

This sequence belongs to the TPP enzyme family. MenD subfamily. In terms of assembly, homodimer. Mg(2+) serves as cofactor. Mn(2+) is required as a cofactor. The cofactor is thiamine diphosphate.

The enzyme catalyses isochorismate + 2-oxoglutarate + H(+) = 5-enolpyruvoyl-6-hydroxy-2-succinyl-cyclohex-3-ene-1-carboxylate + CO2. The protein operates within quinol/quinone metabolism; 1,4-dihydroxy-2-naphthoate biosynthesis; 1,4-dihydroxy-2-naphthoate from chorismate: step 2/7. It participates in quinol/quinone metabolism; menaquinone biosynthesis. Catalyzes the thiamine diphosphate-dependent decarboxylation of 2-oxoglutarate and the subsequent addition of the resulting succinic semialdehyde-thiamine pyrophosphate anion to isochorismate to yield 2-succinyl-5-enolpyruvyl-6-hydroxy-3-cyclohexene-1-carboxylate (SEPHCHC). The protein is 2-succinyl-5-enolpyruvyl-6-hydroxy-3-cyclohexene-1-carboxylate synthase of Staphylococcus aureus (strain MRSA252).